A 357-amino-acid polypeptide reads, in one-letter code: MERVVVGLSGGVDSSVAAALLHRQGYAVEGLTLWLMKGKGQCCSEGMVDAAGICEQMGVPYHVVDSRDRFQEAIVDYVVQGYEAGITPLPCSQCNRAVKFGPMLDYAKTELKADAIATGHYARLRQNPETGRTELLRAVDRNKDQTYFLYDLPQSVLQSVKFPLGELTKPETRQIAAELGLRTAEKPESQDLCLAEVHGSMRAFLDRYIESREGEIVDQSGRVLGKHTGIHHYTIGQRKGLGIAHSEPLYVIAIDPIQNRVVVGDRHSAAQSECTVSRVNWVSIAQPDAPIQAAVQVRYRSAPVPCTVIPLAGDRARILFADPQFSITPGQAAVWYDGDRLLGGGLIDRVERTTEPV.

Residues 7–14 and leucine 33 contribute to the ATP site; that span reads GLSGGVDS. Catalysis depends on cysteine 94, which acts as the Nucleophile. Residues cysteine 94 and cysteine 193 are joined by a disulfide bond. Glycine 119 is an ATP binding site. Positions 143-145 are interaction with tRNA; it reads KDQ. The active-site Cysteine persulfide intermediate is the cysteine 193. The segment at 298 to 299 is interaction with tRNA; sequence RY.

This sequence belongs to the MnmA/TRMU family.

Its subcellular location is the cytoplasm. It catalyses the reaction S-sulfanyl-L-cysteinyl-[protein] + uridine(34) in tRNA + AH2 + ATP = 2-thiouridine(34) in tRNA + L-cysteinyl-[protein] + A + AMP + diphosphate + H(+). Catalyzes the 2-thiolation of uridine at the wobble position (U34) of tRNA, leading to the formation of s(2)U34. The polypeptide is tRNA-specific 2-thiouridylase MnmA (Synechococcus sp. (strain ATCC 27144 / PCC 6301 / SAUG 1402/1) (Anacystis nidulans)).